Consider the following 1012-residue polypeptide: Autotransporter adhesin BpaC (1012 aa).

Positions 1-71 (MNRIFKSIWC…PFAEEAMAAN (71 aa)) are cleaved as a signal peptide. The tract at residues 72 to 921 (NAGVCLTYNG…VGQLNSAVSG (850 aa)) is surface exposed passenger domain. 2 disordered regions span residues 420–746 (GLQG…AGAT) and 785–809 (ENST…ESAA). Residues 427 to 442 (ANTGTASGDNSTASGD) show a composition bias toward polar residues. The span at 443 to 504 (NATASGTNST…ANGTNSTASG (62 aa)) shows a compositional bias: low complexity. The span at 505–519 (DNSTASGTNASATGE) shows a compositional bias: polar residues. Over residues 520-588 (NSTATGTDST…ANGTNSTASG (69 aa)) the composition is skewed to low complexity. The span at 589-603 (DNSTASGTNASATGE) shows a compositional bias: polar residues. Low complexity predominate over residues 604 to 630 (NSTATGTDSTASGSNSTANGTNSTASG). A compositionally biased stretch (polar residues) spans 631 to 645 (DNSTASGTNASATGE). Low complexity-rich tracts occupy residues 646-700 (NSTA…TASG) and 708-746 (TNAS…AGAT). An outer membrane translocation of the passenger domain region spans residues 922-959 (IRNQMDGMQGQIDTLARDAYSGIAAATALTMIPDVDPG). Residues 960 to 1012 (KTLAVGIGTANFKGYQASALGATARITQNLKVKTGVSYSGSNYVWGAGMSYQW) are translocator domain.

Belongs to the autotransporter-2 (AT-2) (TC 1.B.40) family. As to quaternary structure, homotrimer.

The protein resides in the cell surface. It localises to the cell outer membrane. In terms of biological role, involved in virulence. Mediates adherence to human respiratory epithelial cells. The protein is Autotransporter adhesin BpaC of Burkholderia mallei (strain ATCC 23344).